A 411-amino-acid polypeptide reads, in one-letter code: Efflux pump periplasmic linker BepF (411 aa).

Residues 118-196 (FVLQKDALQA…SLEQAQINLG (79 aa)) are a coiled coil.

The protein belongs to the membrane fusion protein (MFP) (TC 8.A.1) family. As to quaternary structure, probably part of a tripartite efflux pump, which is composed of an outer membrane efflux protein, an inner membrane protein and a protein that expands the periplasmic space. Could form a tripartite pump with BepC and BepG.

The protein resides in the periplasm. Its function is as follows. May contribute to resistance to some drugs, such as deoxycholate, sodium dodecyl sulfate and nalidixic acid, in the absence of BepD and BepE. The polypeptide is Efflux pump periplasmic linker BepF (bepF) (Brucella suis biovar 1 (strain 1330)).